The chain runs to 853 residues: DNA mismatch repair protein MutS (853 aa).

Residue 614-621 (GPNMGGKS) participates in ATP binding.

The protein belongs to the DNA mismatch repair MutS family.

In terms of biological role, this protein is involved in the repair of mismatches in DNA. It is possible that it carries out the mismatch recognition step. This protein has a weak ATPase activity. The polypeptide is DNA mismatch repair protein MutS (Escherichia coli (strain K12 / MC4100 / BW2952)).